The chain runs to 502 residues: 4,4'-diaponeurosporene oxygenase (502 aa).

8 to 20 is an FAD binding site; the sequence is IIGGGLGGISAAI.

The protein belongs to the carotenoid/retinoid oxidoreductase family. CrtP subfamily. It depends on FAD as a cofactor.

It carries out the reaction all-trans-4,4'-diaponeurosporene + 2 AH2 + 2 O2 = 4,4'-diaponeurosporenal + 2 A + 3 H2O. The protein operates within carotenoid biosynthesis; staphyloxanthin biosynthesis; staphyloxanthin from farnesyl diphosphate: step 3/5. In terms of biological role, involved in the biosynthesis of the yellow-orange carotenoid staphyloxanthin, which plays a role in the virulence via its protective function against oxidative stress. Catalyzes the oxidation of the terminal methyl side group of 4,4'-diaponeurosporene to form 4,4'-diaponeurosporen-4-al. In Staphylococcus haemolyticus (strain JCSC1435), this protein is 4,4'-diaponeurosporene oxygenase.